The primary structure comprises 86 residues: Neurotoxin-like protein pMD18-NTL1/2/4/5 (86 aa).

The first 21 residues, 1-21, serve as a signal peptide directing secretion; the sequence is MKTLLLTLVVLTIACLDLGYT. Disulfide bonds link C24–C45, C38–C62, C66–C78, and C79–C84.

Belongs to the three-finger toxin family. Short-chain subfamily. Orphan group IX sub-subfamily. Expressed by the venom gland.

Its subcellular location is the secreted. The chain is Neurotoxin-like protein pMD18-NTL1/2/4/5 from Bungarus multicinctus (Many-banded krait).